Here is a 659-residue protein sequence, read N- to C-terminus: DNA ligase (659 aa).

NAD(+)-binding positions include 32–36 (DAEYD), 81–82 (SL), and glutamate 110. Catalysis depends on lysine 112, which acts as the N6-AMP-lysine intermediate. NAD(+) is bound by residues arginine 133, glutamate 168, lysine 284, and lysine 308. Residues cysteine 402, cysteine 405, cysteine 420, and cysteine 425 each coordinate Zn(2+). Positions 582 to 659 (AKPQIFAGKS…SEEEFAELLP (78 aa)) constitute a BRCT domain.

It belongs to the NAD-dependent DNA ligase family. LigA subfamily. It depends on Mg(2+) as a cofactor. Mn(2+) serves as cofactor.

It carries out the reaction NAD(+) + (deoxyribonucleotide)n-3'-hydroxyl + 5'-phospho-(deoxyribonucleotide)m = (deoxyribonucleotide)n+m + AMP + beta-nicotinamide D-nucleotide.. Its function is as follows. DNA ligase that catalyzes the formation of phosphodiester linkages between 5'-phosphoryl and 3'-hydroxyl groups in double-stranded DNA using NAD as a coenzyme and as the energy source for the reaction. It is essential for DNA replication and repair of damaged DNA. The sequence is that of DNA ligase from Desulfitobacterium hafniense (strain Y51).